Consider the following 1142-residue polypeptide: E3 ubiquitin-protein ligase TRIM33 (1142 aa).

Gly residues predominate over residues 1-18 (MAENKGGGEAESGGGGSG). The disordered stretch occupies residues 1–132 (MAENKGGGEA…PGSSSGPPLG (132 aa)). The segment at 1-163 (MAENKGGGEA…AEPKLLPCLH (163 aa)) is necessary for E3 ubiquitin-protein ligase activity and repression of SMAD4 signaling and transcriptional repression. The segment covering 19-42 (SAPVTAGAAGPTAQEAEPPLAAVL) has biased composition (low complexity). A compositionally biased stretch (gly residues) spans 52–64 (RAGAEGGAAGPDD). The segment covering 65–99 (GGVAAASSSSAPAASVPAASVGSAVPGGAASTPAP) has biased composition (low complexity). Over residues 100–122 (AAAPAPAPAPAPAPAPAPAPAPA) the composition is skewed to pro residues. The RING-type zinc finger occupies 141 to 201 (CAVCQQSLQS…VGVIRCPVCR (61 aa)). B box-type zinc fingers lie at residues 228–275 (KSEQ…IRKK) and 287–328 (QRPV…YQFL). Residues cysteine 233, cysteine 236, cysteine 257, histidine 261, cysteine 292, histidine 295, cysteine 315, and histidine 320 each coordinate Zn(2+). Residues 315–417 (CQLLEHKEHR…QMKLLQQQND (103 aa)) form a necessary for oligomerization region. Residues 315–417 (CQLLEHKEHR…QMKLLQQQND (103 aa)) are a coiled coil. Residues lysine 345, lysine 350, lysine 497, and lysine 520 each participate in a glycyl lysine isopeptide (Lys-Gly) (interchain with G-Cter in SUMO2) cross-link. At arginine 531 the chain carries Asymmetric dimethylarginine; alternate. Omega-N-methylarginine; alternate is present on arginine 531. Residue lysine 543 forms a Glycyl lysine isopeptide (Lys-Gly) (interchain with G-Cter in SUMO2) linkage. Arginine 551 carries the post-translational modification Omega-N-methylarginine. Arginine 593 bears the Asymmetric dimethylarginine mark. The residue at position 607 (arginine 607) is an Asymmetric dimethylarginine; alternate. Arginine 607 carries the omega-N-methylarginine; alternate modification. 2 positions are modified to asymmetric dimethylarginine: arginine 614 and arginine 620. Disordered stretches follow at residues 657-676 (PTSP…TSPS), 688-707 (NPEN…EDAG), and 718-834 (YISG…PPLS). The segment covering 738–774 (PSALSPGSSGLSNSHTPVRPPSTSSTGSRGSCGSSGR) has biased composition (low complexity). 2 stretches are compositionally biased toward basic and acidic residues: residues 775 to 794 (TAEK…KQEP) and 808 to 817 (KQEKTEDGRR). N6-acetyllysine; alternate occurs at positions 778 and 784. Residues lysine 778 and lysine 784 each participate in a glycyl lysine isopeptide (Lys-Gly) (interchain with G-Cter in SUMO2); alternate cross-link. Lysine 789 participates in a covalent cross-link: Glycyl lysine isopeptide (Lys-Gly) (interchain with G-Cter in SUMO2). Residues lysine 791 and lysine 808 each participate in a glycyl lysine isopeptide (Lys-Gly) (interchain with G-Cter in SUMO2); alternate cross-link. Glycyl lysine isopeptide (Lys-Gly) (interchain with G-Cter in SUMO1); alternate cross-links involve residues lysine 791 and lysine 808. Lysine 808 is subject to N6-acetyllysine; alternate. Lysine 811 participates in a covalent cross-link: Glycyl lysine isopeptide (Lys-Gly) (interchain with G-Cter in SUMO2). The residue at position 818 (serine 818) is a Phosphoserine. The span at 822 to 834 (LSSPESSLTPPLS) shows a compositional bias: low complexity. Phosphothreonine is present on threonine 830. Lysine 876 is covalently cross-linked (Glycyl lysine isopeptide (Lys-Gly) (interchain with G-Cter in SUMO2)). Phosphoserine is present on serine 877. The segment at 902-949 (EDWCAVCQNGGDLLCCEKCPKVFHLTCHVPTLLSFPSGDWICTFCRDI) adopts a PHD-type zinc-finger fold. Residue lysine 966 is modified to N6-acetyllysine. Lysine 968 is modified (N6-acetyllysine; alternate). Lysine 968 participates in a covalent cross-link: Glycyl lysine isopeptide (Lys-Gly) (interchain with G-Cter in SUMO2); alternate. Residues 972-1095 (GLSPVDQRKC…LYFEDKLSEI (124 aa)) enclose the Bromo domain. Glycyl lysine isopeptide (Lys-Gly) (interchain with G-Cter in SUMO2) cross-links involve residues lysine 1022 and lysine 1058. Threonine 1066 carries the phosphothreonine modification. Lysine 1072 participates in a covalent cross-link: Glycyl lysine isopeptide (Lys-Gly) (interchain with G-Cter in SUMO2). The disordered stretch occupies residues 1103–1142 (PLPEFEQDEDDGEVTEDSDEDFIQPRRKRLKSDERPVHIK). The span at 1107 to 1124 (FEQDEDDGEVTEDSDEDF) shows a compositional bias: acidic residues. Threonine 1117 is subject to Phosphothreonine. Position 1120 is a phosphoserine (serine 1120). Lysine 1133 participates in a covalent cross-link: Glycyl lysine isopeptide (Lys-Gly) (interchain with G-Cter in SUMO2). Basic and acidic residues predominate over residues 1133-1142 (KSDERPVHIK). At serine 1134 the chain carries Phosphoserine.

The protein belongs to the TRIM/RBCC family. Homooligomer and heterooligomer with TRIM24 and TRIM28 family members. Interacts with SMAD4 in unstimulated cells. Found in a complex with SMAD2 and SMAD3 upon addition of TGF-beta. Interacts with SMAD2 and SMAD3. Interacts with SMAD4 under basal and induced conditions and, upon TGF-beta signaling, with activated SMAD2. Forms a ternary complex with SMAD4 and SMAD2 upon TGF-beta signaling. Post-translationally, sumoylated with SUMO1. In terms of tissue distribution, ubiquitous with high level in testis.

It is found in the nucleus. It carries out the reaction S-ubiquitinyl-[E2 ubiquitin-conjugating enzyme]-L-cysteine + [acceptor protein]-L-lysine = [E2 ubiquitin-conjugating enzyme]-L-cysteine + N(6)-ubiquitinyl-[acceptor protein]-L-lysine.. It functions in the pathway protein modification; protein ubiquitination. Functionally, acts as an E3 ubiquitin-protein ligase. Promotes SMAD4 ubiquitination, nuclear exclusion and degradation via the ubiquitin proteasome pathway. May act as a transcriptional repressor. Inhibits the transcriptional response to TGF-beta/BMP signaling cascade. Plays a role in the control of cell proliferation. Its association with SMAD2 and SMAD3 stimulates erythroid differentiation of hematopoietic stem/progenitor. Monoubiquitinates SMAD4 and acts as an inhibitor of SMAD4-dependent TGF-beta/BMP signaling cascade (Monoubiquitination of SMAD4 hampers its ability to form a stable complex with activated SMAD2/3 resulting in inhibition of TGF-beta/BMP signaling cascade). The protein is E3 ubiquitin-protein ligase TRIM33 (Trim33) of Mus musculus (Mouse).